Here is a 354-residue protein sequence, read N- to C-terminus: Sorbitol dehydrogenase (354 aa).

Position 43 (C43) interacts with Zn(2+). Position 49 (Y49) interacts with substrate. Zn(2+) is bound by residues H67 and E68. E153 is a substrate binding site. 3 residues coordinate NAD(+): I181, D201, and R206. Residues S208 and S222 each carry the phosphoserine modification. Residues 270-272 (VGL) and 294-296 (VFR) each bind NAD(+). The substrate site is built by R296 and Y297.

This sequence belongs to the zinc-containing alcohol dehydrogenase family. Homotetramer. Requires Zn(2+) as cofactor. Expressed in liver.

Its subcellular location is the mitochondrion membrane. The protein localises to the cell projection. The protein resides in the cilium. It localises to the flagellum. It catalyses the reaction xylitol + NAD(+) = D-xylulose + NADH + H(+). The catalysed reaction is L-iditol + NAD(+) = keto-L-sorbose + NADH + H(+). It carries out the reaction keto-D-fructose + NADH + H(+) = D-sorbitol + NAD(+). In terms of biological role, polyol dehydrogenase that catalyzes the reversible NAD(+)-dependent oxidation of various sugar alcohols. Is mostly active with xylitol, L-iditol and D-sorbitol (D-glucitol) as substrates, leading to the C2-oxidized products D-xylulose, L-sorbose and D-fructose, respectively. Is a key enzyme in the polyol pathway that interconverts glucose and fructose via sorbitol, which constitutes an important alternate route for glucose metabolism. May play a role in sperm motility by using sorbitol as an alternative energy source for sperm motility. The polypeptide is Sorbitol dehydrogenase (SORD) (Ovis aries (Sheep)).